The sequence spans 138 residues: ATP synthase epsilon chain (138 aa).

It belongs to the ATPase epsilon chain family. F-type ATPases have 2 components, CF(1) - the catalytic core - and CF(0) - the membrane proton channel. CF(1) has five subunits: alpha(3), beta(3), gamma(1), delta(1), epsilon(1). CF(0) has three main subunits: a, b and c.

Its subcellular location is the cell membrane. In terms of biological role, produces ATP from ADP in the presence of a proton gradient across the membrane. The sequence is that of ATP synthase epsilon chain from Streptococcus equi subsp. zooepidemicus (strain H70).